Here is a 243-residue protein sequence, read N- to C-terminus: Tyrosine recombinase XerD-like (243 aa).

The Core-binding (CB) domain occupies 1 to 72 (MKQAIESFIQ…AVNQFLYFLY (72 aa)). Residues 91 to 243 (SVKKKLERED…KTSMSLEKFR (153 aa)) form the Tyr recombinase domain. Active-site residues include lysine 149 and arginine 210.

Belongs to the 'phage' integrase family. XerD-like subfamily.

The protein localises to the cytoplasm. Putative tyrosine recombinase. Not involved in the cutting and rejoining of the recombining DNA molecules on dif(SL) site. This Streptococcus suis (strain 98HAH33) protein is Tyrosine recombinase XerD-like.